A 557-amino-acid polypeptide reads, in one-letter code: Dihydroxy-acid dehydratase (557 aa).

Asp78 serves as a coordination point for Mg(2+). Residue Cys119 participates in [2Fe-2S] cluster binding. Mg(2+)-binding residues include Asp120 and Lys121. Residue Lys121 is modified to N6-carboxylysine. A [2Fe-2S] cluster-binding site is contributed by Cys192. Residue Glu442 participates in Mg(2+) binding. Ser468 (proton acceptor) is an active-site residue.

The protein belongs to the IlvD/Edd family. In terms of assembly, homodimer. [2Fe-2S] cluster is required as a cofactor. Mg(2+) serves as cofactor.

The enzyme catalyses (2R)-2,3-dihydroxy-3-methylbutanoate = 3-methyl-2-oxobutanoate + H2O. It catalyses the reaction (2R,3R)-2,3-dihydroxy-3-methylpentanoate = (S)-3-methyl-2-oxopentanoate + H2O. It functions in the pathway amino-acid biosynthesis; L-isoleucine biosynthesis; L-isoleucine from 2-oxobutanoate: step 3/4. Its pathway is amino-acid biosynthesis; L-valine biosynthesis; L-valine from pyruvate: step 3/4. In terms of biological role, functions in the biosynthesis of branched-chain amino acids. Catalyzes the dehydration of (2R,3R)-2,3-dihydroxy-3-methylpentanoate (2,3-dihydroxy-3-methylvalerate) into 2-oxo-3-methylpentanoate (2-oxo-3-methylvalerate) and of (2R)-2,3-dihydroxy-3-methylbutanoate (2,3-dihydroxyisovalerate) into 2-oxo-3-methylbutanoate (2-oxoisovalerate), the penultimate precursor to L-isoleucine and L-valine, respectively. The sequence is that of Dihydroxy-acid dehydratase from Bacillus mycoides (strain KBAB4) (Bacillus weihenstephanensis).